A 307-amino-acid polypeptide reads, in one-letter code: Small ribosomal subunit protein uS2 (307 aa).

A disordered region spans residues 256–307 (GGEAEQAAVDATGGAATEETPAAESTGAASEAAAVSEAAEPATEQPAADAEA). A compositionally biased stretch (low complexity) spans 259 to 307 (AEQAAVDATGGAATEETPAAESTGAASEAAAVSEAAEPATEQPAADAEA).

Belongs to the universal ribosomal protein uS2 family.

This is Small ribosomal subunit protein uS2 from Nocardioides sp. (strain ATCC BAA-499 / JS614).